Consider the following 57-residue polypeptide: COP9 signalosome complex subunit 9 (57 aa).

This sequence belongs to the CSN9 family. Component of the CSN complex, probably composed of cops1, cops2, cops3, cops4, cops5, cops6, cops7, cops8 and cops9.

It is found in the nucleus. Its subcellular location is the cytoplasm. The protein localises to the nucleoplasm. Component of the COP9 signalosome complex (CSN), a complex involved in various cellular and developmental processes. The CSN complex is an essential regulator of the ubiquitin (Ubl) conjugation pathway by mediating the deneddylation of the cullin subunits of SCF-type E3 ligase complexes, leading to decrease the Ubl ligase activity. May play a role in cell proliferation. The polypeptide is COP9 signalosome complex subunit 9 (Xenopus tropicalis (Western clawed frog)).